Reading from the N-terminus, the 672-residue chain is MTPSQVAFEIRGTLLPGEVFAICGSCDALGNWNPQNAVALLPENDTGESMLWKATIVLSRGVSVQYRYFKGYFLEPKTIGGPCQVIVHKWETHLQPRSITPLESEIIIDDGQFGIHNGVETLDSGWLTCQTEIRLRLHYSEKPPVSITKKKLKKSRFRVKLTLEGLEEDDDDRVSPTVLHKMSNSLEISLISDNEFKCRHSQPECGYGLQPDRWTEYSIQTMEPDNLELIFDFFEEDLSEHVVQGDALPGHVGTACLLSSTIAESGKSAGILTLPIMSRNSRKTIGKVRVDYIIIKPLPGYSCDMKSSFSKYWKPRIPLDVGHRGAGNSTTTAQLAKVQENTIASLRNAASHGAAFVEFDVHLSKDFVPVVYHDLTCCLTMKKKFDADPVELFEIPVKELTFDQLQLLKLTHVTALKSKDRKESVVQEENSFSENQPFPSLKMVLESLPEDVGFNIEIKWICQQRDGMWDGNLSTYFDMNLFLDIILKTVLENSGKRRIVFSSFDADICTMVRQKQNKYPILFLTQGKSEIYPELMDLRSRTTPIAMSFAQFENLLGINVHTEDLLRNPSYIQEAKAKGLVIFCWGDDTNDPENRRKLKELGVNGLIYDRIYDWMPEQPNIFQVEQLERLKQELPELKSCLCPTVSRFVPSSLCGESDIHVDANGIDNVENA.

Residues 1–115 (MTPSQVAFEI…IIIDDGQFGI (115 aa)) form the CBM20 domain. Substrate contacts are provided by residues Lys-70 and 88–89 (HK). Ser-175 and Ser-424 each carry phosphoserine. A GP-PDE domain is found at 318-618 (PLDVGHRGAG…DRIYDWMPEQ (301 aa)). A Phosphotyrosine modification is found at Tyr-608.

Belongs to the glycerophosphoryl diester phosphodiesterase family. In terms of tissue distribution, widely expressed, with highest expression in spinal chord.

The protein localises to the cytoplasm. The protein resides in the cytosol. It carries out the reaction sn-glycerol 3-phosphocholine + H2O = sn-glycerol 3-phosphate + choline + H(+). Its function is as follows. May be involved in the negative regulation of skeletal muscle differentiation, independently of its glycerophosphocholine phosphodiesterase activity. The polypeptide is Glycerophosphocholine phosphodiesterase GPCPD1 (GPCPD1) (Homo sapiens (Human)).